Reading from the N-terminus, the 156-residue chain is Ribosomal RNA large subunit methyltransferase H (156 aa).

Residues Leu73, Gly104, and 123–128 (LSSLTL) each bind S-adenosyl-L-methionine.

This sequence belongs to the RNA methyltransferase RlmH family. As to quaternary structure, homodimer.

It is found in the cytoplasm. It carries out the reaction pseudouridine(1915) in 23S rRNA + S-adenosyl-L-methionine = N(3)-methylpseudouridine(1915) in 23S rRNA + S-adenosyl-L-homocysteine + H(+). In terms of biological role, specifically methylates the pseudouridine at position 1915 (m3Psi1915) in 23S rRNA. This is Ribosomal RNA large subunit methyltransferase H from Neisseria meningitidis serogroup C (strain 053442).